We begin with the raw amino-acid sequence, 98 residues long: Large ribosomal subunit protein uL23 (98 aa).

Belongs to the universal ribosomal protein uL23 family. Part of the 50S ribosomal subunit. Contacts protein L29, and trigger factor when it is bound to the ribosome.

In terms of biological role, one of the early assembly proteins it binds 23S rRNA. One of the proteins that surrounds the polypeptide exit tunnel on the outside of the ribosome. Forms the main docking site for trigger factor binding to the ribosome. The polypeptide is Large ribosomal subunit protein uL23 (Methylobacterium nodulans (strain LMG 21967 / CNCM I-2342 / ORS 2060)).